The chain runs to 544 residues: Probable acyl-activating enzyme 8 (544 aa).

It belongs to the ATP-dependent AMP-binding enzyme family. Expressed at low levels in roots, leaves, stems, flowers and developing seeds.

May act as an acid--thiol ligase that activates carboxylic acids by forming acyl-CoAs. The polypeptide is Probable acyl-activating enzyme 8 (AAE8) (Arabidopsis thaliana (Mouse-ear cress)).